The chain runs to 97 residues: AEVKLGADDGALVFSPSSFSVAKGEGISFKNNAGFPHNIVFDEDEVPAGVDVSKISQEDYLDGAGESFTVTLTEKGTYKFYCEPHAGAGMKGEVTVT.

Residues 1 to 97 (AEVKLGADDG…AGMKGEVTVT (97 aa)) enclose the Plastocyanin-like domain. Cu cation is bound by residues His37, Cys82, His85, and Met90.

It belongs to the plastocyanin family. The cofactor is Cu(2+).

It is found in the plastid. It localises to the chloroplast thylakoid membrane. In terms of biological role, participates in electron transfer between P700 and the cytochrome b6-f complex in photosystem I. This Daucus carota (Wild carrot) protein is Plastocyanin (PETE).